A 463-amino-acid chain; its full sequence is MDYLPLFHKLQGGRVLVVGGGEIALRKARLLADAGGVLRVVAPDVDGQLAALAREGGGEVLVRGYQAADLVGCRLVIAATDDPGLNAQVSADAQALSVPVNVVDAPALCTVIFPAIVDRSPLVIAVSSGGDAPVLARLIRAKLEAWIPSAYGELAGLAARFRHKVKSLYPDVNQRRGFWETVFQGPIAERQLAGQGAEAERLLQAMVDGAPVQQGGEVYLVGAGPGDPDLLTFRALRLMQQADVVLYDRLVAPAIIDMCRRDAERIYVGKRRADHSVPQDQINRLLVDLARQGKRVLRLKGGDPFIFGRGGEEIEELAEHGIPFQVVPGITAASGCSAYGGIPLTHRDYAQSVRFVTGHLKDGTSNLPWTDLVAPAQTLVFYMGLVGLPTICAELIRHGRAASTPAALVQQGTTRNQRVFTGTLADLPDLVAQHEVHAPTLVIVGEVVQLRDKLAWFEGSQNS.

The segment at 1–203 (MDYLPLFHKL…GQGAEAERLL (203 aa)) is precorrin-2 dehydrogenase /sirohydrochlorin ferrochelatase. Residues 22-23 (EI) and 43-44 (PD) each bind NAD(+). S128 bears the Phosphoserine mark. The uroporphyrinogen-III C-methyltransferase stretch occupies residues 216 to 463 (GEVYLVGAGP…LAWFEGSQNS (248 aa)). P225 is a binding site for S-adenosyl-L-methionine. D248 (proton acceptor) is an active-site residue. The active-site Proton donor is K270. S-adenosyl-L-methionine is bound by residues 301–303 (GGD), I306, 331–332 (TA), M383, and G412.

This sequence in the N-terminal section; belongs to the precorrin-2 dehydrogenase / sirohydrochlorin ferrochelatase family. In the C-terminal section; belongs to the precorrin methyltransferase family.

It catalyses the reaction uroporphyrinogen III + 2 S-adenosyl-L-methionine = precorrin-2 + 2 S-adenosyl-L-homocysteine + H(+). The catalysed reaction is precorrin-2 + NAD(+) = sirohydrochlorin + NADH + 2 H(+). The enzyme catalyses siroheme + 2 H(+) = sirohydrochlorin + Fe(2+). It participates in cofactor biosynthesis; adenosylcobalamin biosynthesis; precorrin-2 from uroporphyrinogen III: step 1/1. It functions in the pathway cofactor biosynthesis; adenosylcobalamin biosynthesis; sirohydrochlorin from precorrin-2: step 1/1. The protein operates within porphyrin-containing compound metabolism; siroheme biosynthesis; precorrin-2 from uroporphyrinogen III: step 1/1. Its pathway is porphyrin-containing compound metabolism; siroheme biosynthesis; siroheme from sirohydrochlorin: step 1/1. It participates in porphyrin-containing compound metabolism; siroheme biosynthesis; sirohydrochlorin from precorrin-2: step 1/1. In terms of biological role, multifunctional enzyme that catalyzes the SAM-dependent methylations of uroporphyrinogen III at position C-2 and C-7 to form precorrin-2 via precorrin-1. Then it catalyzes the NAD-dependent ring dehydrogenation of precorrin-2 to yield sirohydrochlorin. Finally, it catalyzes the ferrochelation of sirohydrochlorin to yield siroheme. The chain is Siroheme synthase from Pseudomonas putida (strain ATCC 700007 / DSM 6899 / JCM 31910 / BCRC 17059 / LMG 24140 / F1).